The sequence spans 405 residues: Syndecan-3 (405 aa).

Positions 1–22 are cleaved as a signal peptide; the sequence is MPAELRRLAVLLLLLSARAALA. At 23–347 the chain is on the extracellular side; sequence QPWRNENYER…PQKNILERKE (325 aa). Residues 31–59 are disordered; sequence ERPVDLEGSGDDDPFGDDELDDIYSGSGS. The span at 38–52 shows a compositional bias: acidic residues; the sequence is GSGDDDPFGDDELDD. O-linked (Xyl...) (glycosaminoglycan) serine glycans are attached at residues S39, S55, S57, S59, and S66. 2 disordered regions span residues 134–159 and 191–301; these read TTTA…ATTT and TRAT…ELGN. Low complexity predominate over residues 191-201; it reads TRATTLETPTT. The segment covering 202–237 has biased composition (polar residues); it reads SIPETSVLTEVTTSRLVPSSTAKPRSLPKPSTSRTA. Residues S280, S283, and S330 are each glycosylated (O-linked (Xyl...) (glycosaminoglycan) serine). The chain crosses the membrane as a helical span at residues 348–372; the sequence is VLIAVIVGGVVGALFAAFLVMLLIY. Topologically, residues 373–405 are cytoplasmic; that stretch reads RMKKKDEGSYTLEEPKQANVTYQKPDKQEEFYA.

This sequence belongs to the syndecan proteoglycan family. In terms of processing, O-glycosylated within the Thr/Ser-rich region which could interact with lectin domains on other molecules. As to expression, proximal chondrogenic central core of embryonic limb buds where cartilage differentiation is being initiated.

It localises to the membrane. Cell surface proteoglycan that may bear both heparan sulfate and chondroitin sulfate. The multiple functional domains provide potential sites for mediating the adhesive cell-matrix interactions and cytoskeletal reorganization involved in limb chondrogenesis. Interaction with other matrix ligands as well as phosphorylation and shedding of the ectodomain might be involved in cell shape changes that occur during chondrogenesis. Furthermore, shedding of the ectodomain might break the adhesive interactions that promoted condensation, thus facilitating the deposition of cartilage matrix molecules. The sequence is that of Syndecan-3 (SDC3) from Gallus gallus (Chicken).